The following is a 217-amino-acid chain: MNSLIKSTKFLKKTNIIRSYCTKTNNNNNTNITKNVLSEIEKEKLKRQIIERIIRVDHAGEFGAARIYEGQLAVLANTKEGPLIREMADQEKEHQAKFNQLIYEKRVRPTILSPIWNVAGFGLGYVSALMGKEAAMAVTVAVETVISDHYNDQLRQLNDAGIDDKELKETIKKFRDDELEHMHIGIEHDAELAPLYKPFSELVKVGTKTAIWLSTRV.

Tandem repeats lie at residues 49–130 (IIER…SALM) and 131–217 (GKEA…STRV). Positions 49–217 (IIERIIRVDH…KTAIWLSTRV (169 aa)) are 2 X approximate tandem repeats. R52 serves as a coordination point for NADH. Fe cation contacts are provided by E61, E91, H94, E143, E178, and H181. R216 contacts NADH.

The protein belongs to the COQ7 family. Component of a multi-subunit COQ enzyme complex. Fe cation serves as cofactor.

The protein localises to the mitochondrion inner membrane. It catalyses the reaction a 5-methoxy-2-methyl-3-(all-trans-polyprenyl)benzoquinone + NADH + O2 = a 3-demethylubiquinone + NAD(+) + H2O. Its pathway is cofactor biosynthesis; ubiquinone biosynthesis. Functionally, catalyzes the hydroxylation of the 5-methoxy-2-methyl-3-(all-trans-polyprenyl)benzoquinone at the C6 position and participates in the biosynthesis of ubiquinone. Catalyzes the reaction through a substrate-mediated reduction pathway, whereby NADH shuttles electrons to 5-methoxy-2-methyl-3-(all-trans-decaprenyl)benzoquinone, which then transfers the electrons to the two Fe(3+) centers. The binding of 5-methoxy-2-methyl-3-(all-trans-polyprenyl)benzoquinone (DMQn) mediates reduction of the diiron center by nicotinamide adenine dinucleotide (NADH) and initiates oxygen activation for subsequent DMQ hydroxylation. Also has a structural role in the COQ enzyme complex, stabilizing other COQ polypeptides. In Dictyostelium discoideum (Social amoeba), this protein is NADPH-dependent 3-demethoxyubiquinone 3-hydroxylase, mitochondrial.